A 124-amino-acid polypeptide reads, in one-letter code: Small ribosomal subunit protein uS11 (124 aa).

It belongs to the universal ribosomal protein uS11 family. Part of the 30S ribosomal subunit. Interacts with proteins S7 and S18. Binds to IF-3.

Located on the platform of the 30S subunit, it bridges several disparate RNA helices of the 16S rRNA. Forms part of the Shine-Dalgarno cleft in the 70S ribosome. In Anaplasma marginale (strain St. Maries), this protein is Small ribosomal subunit protein uS11.